A 177-amino-acid chain; its full sequence is R-phycoerythrin beta chain (177 aa).

(2R,3E)-phycoerythrobilin contacts are provided by N35 and D39. Phycourobilin contacts are provided by C50, D54, and C61. Residues N72, 77-78 (RR), C82, and 84-85 (RD) contribute to the (2R,3E)-phycoerythrobilin site. At N72 the chain carries N4-methylasparagine. 147 to 148 (SQ) contacts phycourobilin. Residues I154 and C158 each coordinate (2R,3E)-phycoerythrobilin.

It belongs to the phycobiliprotein family. As to quaternary structure, heterododecamer of 6 alpha and 6 beta chains. The basic functional unit of phycobiliproteins is a ring-shaped hexamer formed from two back-to-back trimers contacting via the alpha chain subunits. The trimers are composed of alpha/beta subunit heterodimers arranged around a three-fold axis of symmetry. The phycoerythrins also contain a gamma subunit which is located in the center of the hexamer. Contains two covalently linked phycoerythrobilin chromophores and one covalently linked phycourobilin chromophore.

It localises to the plastid. It is found in the chloroplast thylakoid membrane. Light-harvesting photosynthetic tetrapyrrole chromophore-protein from the phycobiliprotein complex. The protein is R-phycoerythrin beta chain (rpeB) of Agarophyton chilense (Red seaweed).